The primary structure comprises 407 residues: Cell division protein FtsZ (407 aa).

GTP-binding positions include 18-22 (GGGVN), 105-107 (GTG), E136, R140, and D184. The disordered stretch occupies residues 312-407 (FDGGQPPARR…EELDVPDFLK (96 aa)). Composition is skewed to low complexity over residues 336–348 (AAPARSSAESTRP) and 368–377 (APATASGESS). The segment covering 381-390 (VSPPHVPPAR) has biased composition (pro residues). The span at 396–407 (QAEELDVPDFLK) shows a compositional bias: acidic residues.

Belongs to the FtsZ family. As to quaternary structure, homodimer. Polymerizes to form a dynamic ring structure in a strictly GTP-dependent manner. Interacts directly with several other division proteins.

It is found in the cytoplasm. Its function is as follows. Essential cell division protein that forms a contractile ring structure (Z ring) at the future cell division site. The regulation of the ring assembly controls the timing and the location of cell division. One of the functions of the FtsZ ring is to recruit other cell division proteins to the septum to produce a new cell wall between the dividing cells. Binds GTP and shows GTPase activity. In Streptomyces griseus, this protein is Cell division protein FtsZ.